We begin with the raw amino-acid sequence, 241 residues long: Probable transcriptional regulatory protein Mpe_A1337 (241 aa).

Residues 1–20 (MAGHSKWANIQHRKGRQDEK) form a disordered region.

Belongs to the TACO1 family.

It localises to the cytoplasm. The polypeptide is Probable transcriptional regulatory protein Mpe_A1337 (Methylibium petroleiphilum (strain ATCC BAA-1232 / LMG 22953 / PM1)).